We begin with the raw amino-acid sequence, 235 residues long: Carbohydrate deacetylase (235 aa).

Residues His-61 and His-124 each contribute to the Mg(2+) site.

The protein belongs to the YdjC deacetylase family. It depends on Mg(2+) as a cofactor.

Probably catalyzes the deacetylation of acetylated carbohydrates an important step in the degradation of oligosaccharides. The polypeptide is Carbohydrate deacetylase (Bacillus cereus (strain 03BB102)).